We begin with the raw amino-acid sequence, 247 residues long: Adenosylcobinamide-GDP ribazoletransferase (247 aa).

5 consecutive transmembrane segments (helical) span residues 34 to 54 (IITF…VFMV), 59 to 79 (CGVP…TGGF), 113 to 133 (GGLA…ELTL), 138 to 158 (ILAS…LLMY), and 194 to 214 (VLLP…AIFI).

It belongs to the CobS family. Mg(2+) is required as a cofactor.

The protein localises to the cell inner membrane. It carries out the reaction alpha-ribazole + adenosylcob(III)inamide-GDP = adenosylcob(III)alamin + GMP + H(+). The enzyme catalyses alpha-ribazole 5'-phosphate + adenosylcob(III)inamide-GDP = adenosylcob(III)alamin 5'-phosphate + GMP + H(+). It functions in the pathway cofactor biosynthesis; adenosylcobalamin biosynthesis; adenosylcobalamin from cob(II)yrinate a,c-diamide: step 7/7. In terms of biological role, joins adenosylcobinamide-GDP and alpha-ribazole to generate adenosylcobalamin (Ado-cobalamin). Also synthesizes adenosylcobalamin 5'-phosphate from adenosylcobinamide-GDP and alpha-ribazole 5'-phosphate. This is Adenosylcobinamide-GDP ribazoletransferase from Escherichia coli O127:H6 (strain E2348/69 / EPEC).